A 521-amino-acid polypeptide reads, in one-letter code: BAR/IMD domain-containing adapter protein 2 (521 aa).

Residues Met-1–Ser-250 enclose the IMD domain. The stretch at Asp-132–Asn-153 forms a coiled coil. Phosphoserine is present on residues Ser-262, Ser-324, Ser-326, and Ser-337. A disordered region spans residues Val-299–Ala-370. A compositionally biased stretch (low complexity) spans Gln-321–Ser-335. The residue at position 341 (Thr-341) is a Phosphothreonine. Ser-347 bears the Phosphoserine mark. A compositionally biased stretch (polar residues) spans Thr-349–Met-368. Thr-361 is modified (phosphothreonine). 4 positions are modified to phosphoserine: Ser-367, Ser-385, Ser-396, and Ser-455. The SH3 domain maps to Asn-375 to Ser-438. The tract at residues His-445–Pro-480 is disordered. The segment covering Ser-447–Asn-458 has biased composition (polar residues).

As to quaternary structure, homodimer. Interacts with CDC42 and RAC1 that have been activated by GTP binding. Interacts with ATN1, ADGRB1, DIAPH1, EPS8, SHANK1, SHANK2, SHANK3, TIAM1, WASF1 and WASF2. Interacts with ENAH after recruitment of CDC42. Post-translationally, phosphorylated on tyrosine residues by INSR in response to insulin treatment.

It localises to the cytoplasm. Its subcellular location is the membrane. It is found in the cell projection. The protein resides in the filopodium. The protein localises to the ruffle. It localises to the cytoskeleton. In terms of biological role, adapter protein that links membrane-bound small G-proteins to cytoplasmic effector proteins. Necessary for CDC42-mediated reorganization of the actin cytoskeleton and for RAC1-mediated membrane ruffling. Involved in the regulation of the actin cytoskeleton by WASF family members and the Arp2/3 complex. Plays a role in neurite growth. Acts syngeristically with ENAH to promote filipodia formation. Plays a role in the reorganization of the actin cytoskeleton in response to bacterial infection. Participates in actin bundling when associated with EPS8, promoting filopodial protrusions. This Cricetulus griseus (Chinese hamster) protein is BAR/IMD domain-containing adapter protein 2 (BAIAP2).